The chain runs to 416 residues: ORC1-type DNA replication protein 9 (416 aa).

Residues 79–83 (SGKSL), Y226, and R238 each bind ATP.

The protein belongs to the CDC6/cdc18 family.

In terms of biological role, involved in regulation of DNA replication. The protein is ORC1-type DNA replication protein 9 (cdc6i) of Haloarcula marismortui (strain ATCC 43049 / DSM 3752 / JCM 8966 / VKM B-1809) (Halobacterium marismortui).